Reading from the N-terminus, the 251-residue chain is Large ribosomal subunit protein uL16m (251 aa).

Residues Met-1 to Gly-29 constitute a mitochondrion transit peptide.

It belongs to the universal ribosomal protein uL16 family. In terms of assembly, component of the mitochondrial ribosome large subunit (39S) which comprises a 16S rRNA and about 50 distinct proteins.

The protein localises to the mitochondrion. The polypeptide is Large ribosomal subunit protein uL16m (Mrpl16) (Rattus norvegicus (Rat)).